The following is a 1009-amino-acid chain: Ulvan lyase, long isoform (1009 aa).

Residues 1–32 (MTAQKSKYFNRIMTMNTLLFSLLTVGFSQAYA) form the signal peptide. 137–138 (SH) lines the substrate pocket. Residue His-138 is the Proton donor/acceptor of the active site. Residues Asp-200, Asp-210, and Lys-212 each coordinate Ca(2+). Positions 291 and 308 each coordinate substrate. Positions 311, 314, and 316 each coordinate Ca(2+). Tyr-372 provides a ligand contact to substrate.

Belongs to the polysaccharide lyase 24 family.

Ulvan lyase involved in ulvan degradation. Ulvan is the main polysaccharide component of the Ulvales (green seaweed) cell wall. It is composed of disaccharide building blocks comprising 3-sulfated rhamnose (Rha3S) linked to D-glucuronic acid (GlcA), L-iduronic acid (IduA), or D-xylose (Xyl). Ulvan lyase catalyzes preferentially the endolytic cleavage of the glycosidic bond between Rha3S and the uronic acid GlcA, but not IduA, producing oligosaccharides that have unsaturated 4-deoxy-L-threo-hex-4-enopyranosiduronic acid (deltaUA) at the non-reducing end. The most abundant end products in the degradation of the ulvan polysaccharide were deltaUA-Rha3S disaccharides and deltaUA-Rha3S-IduA-Rha3S and deltaUA-Rha3S-Xyl-Rha3S tetrasaccharides. The polypeptide is Ulvan lyase, long isoform (ullA) (Glaciecola sp. (strain KUL10)).